A 612-amino-acid polypeptide reads, in one-letter code: Probable cytosolic Fe-S cluster assembly factor SJAG_02895 (612 aa).

13-20 (GKGGVGKS) provides a ligand contact to ATP. The [4Fe-4S] cluster site is built by cysteine 200 and cysteine 203. WD repeat units follow at residues 287–326 (GHRGRIWSVAVHPTLPLVATASEDKSVRVFQAQTGELIHV), 330–370 (YHTR…WECV), 375–414 (GHENEVKCVAWSHDGVYLATCSRDKSVWIWEAMEDDEFDC), 420–459 (EHTQDVKVVAWHPKDDLLVSGSYDNTIRFWRDDGDDWVQT), 464–503 (SHTSTVWALNFSPDGRLLASGDGEGEVFIWEKLVSNEDAA), 528–566 (TFTEPVYTLGWKDDHTLCASGAEGTIGLFAYEDDVSTWH), and 574–612 (AHDVYEINTIAWTNDSRLLSGGDDGLCNVWKLSEADQTA).

It in the N-terminal section; belongs to the Mrp/NBP35 ATP-binding proteins family. NUBP2/CFD1 subfamily. In the C-terminal section; belongs to the WD repeat CIA1 family. As to quaternary structure, heterotetramer of 2 nbp35 and 2 SJAG_02895 chains. [4Fe-4S] cluster is required as a cofactor.

The protein localises to the cytoplasm. The protein resides in the nucleus. In terms of biological role, fusion protein of two essential components of the cytosolic iron-sulfur (Fe/S) protein assembly (CIA) machinery. Required for maturation of extramitochondrial Fe-S proteins. May form a heterotetramer with nubp35, functioning as a Fe-S scaffold complex, mediating the de novo assembly of an Fe-S cluster and its transfer to target apoproteins. This chain is Probable cytosolic Fe-S cluster assembly factor SJAG_02895, found in Schizosaccharomyces japonicus (strain yFS275 / FY16936) (Fission yeast).